Here is a 156-residue protein sequence, read N- to C-terminus: Small ribosomal subunit protein uS7 (156 aa).

The protein belongs to the universal ribosomal protein uS7 family. Part of the 30S ribosomal subunit. Contacts proteins S9 and S11.

Functionally, one of the primary rRNA binding proteins, it binds directly to 16S rRNA where it nucleates assembly of the head domain of the 30S subunit. Is located at the subunit interface close to the decoding center, probably blocks exit of the E-site tRNA. The sequence is that of Small ribosomal subunit protein uS7 from Syntrophus aciditrophicus (strain SB).